The sequence spans 96 residues: Guanine nucleotide-binding protein alpha-9 subunit (96 aa).

Residues 2–96 (YFHSTAIILF…ISASLKMVGV (95 aa)) form the G-alpha domain. Positions 9–16 (ILFLNKID) are G1 motif. GTP contacts are provided by residues 13 to 16 (NKID) and A69. The tract at residues 67 to 72 (TSATDT) is G2 motif.

This sequence belongs to the G-alpha family. G proteins are composed of 3 units; alpha, beta and gamma. The alpha chain contains the guanine nucleotide binding site. As to expression, expressed in ASJ neurons.

Its function is as follows. Guanine nucleotide-binding proteins (G proteins) are involved as modulators or transducers in various transmembrane signaling systems. Plays a role in innate immunity and maintaining survival in response to metabolites of E.coli. This might be by regulating the expression and signaling of genes such as lys-8, ins-7 and daf-28. Has a role in lifespan to promote longevity. The chain is Guanine nucleotide-binding protein alpha-9 subunit from Caenorhabditis elegans.